Here is a 566-residue protein sequence, read N- to C-terminus: Acyl-CoA synthetase ALT10 (566 aa).

An AMP-binding site is contributed by 196–207 (MLFTSGTTGAPK). The interval 473 to 551 (EVEHAALSHE…DAVHYNRTGK (79 aa)) is AMP-binding.

Belongs to the ATP-dependent AMP-binding enzyme family.

Its pathway is mycotoxin biosynthesis. Its function is as follows. Acyl-CoA synthetase; part of the gene cluster that mediates the biosynthesis of the host-selective toxins (HSTs) AAL-toxins, sphinganine-analog mycotoxins responsible for Alternaria stem canker on tomato by the tomato pathotype. The biosynthesis starts with the polyketide synthase ALT1-catalyzed C-16 carbon chain assembly from one starter acetyl-CoA unit with malonyl-CoA extender units. ALT1 also selectively transfers methyl groups at the first and the third cycle of chain elongation for AAL toxin. The C-16 polyketide chain is released from the enzyme by a nucleophilic attack of a carbanion, which is derived from R-carbon of glycin by decarboxylation, on the carbonyl carbon of polyketide acyl chain. This step is probably catalyzed by a pyridoxal 5'-phosphate-dependent aminoacyl transferase ALT4. The respective functions of the other enzymes encoded by the cluster have still to be elucidated. The sphingosine N-acyltransferase-like protein ALT7 seems not to act as a resistance/self-tolerance factor against the toxin in the toxin biosynthetic gene cluster, contrary to what is expected. The polypeptide is Acyl-CoA synthetase ALT10 (Alternaria alternata (Alternaria rot fungus)).